Consider the following 621-residue polypeptide: tRNA uridine 5-carboxymethylaminomethyl modification enzyme MnmG (621 aa).

FAD is bound at residue 9–14 (GGGHAG). 270–284 (GPRYCPSIEDKIVKF) is a binding site for NAD(+).

The protein belongs to the MnmG family. In terms of assembly, homodimer. Heterotetramer of two MnmE and two MnmG subunits. FAD is required as a cofactor.

Its subcellular location is the cytoplasm. Functionally, NAD-binding protein involved in the addition of a carboxymethylaminomethyl (cmnm) group at the wobble position (U34) of certain tRNAs, forming tRNA-cmnm(5)s(2)U34. The protein is tRNA uridine 5-carboxymethylaminomethyl modification enzyme MnmG of Borrelia garinii subsp. bavariensis (strain ATCC BAA-2496 / DSM 23469 / PBi) (Borreliella bavariensis).